The chain runs to 426 residues: MGNNIKVTFNPDKIAAWWPAVGTYYTTTYPQNQSVFQPGIYQTTSLVNPKTQQELDSVLINRYKQIDWNTWQGFPVDQKLPLVNRDPPPKSAQTFEIKPGPIIVPGIRDIPRGLVPPQTPTNRDQGRKPTPPTPPLRDTHPHLTMKNQTFHLQGFVDGLRDLTTTERQHNAYGDPFTTLSPVVPTVSTILSPPSTTGDPAQSPEMSPSSLLGLLAGLQVVYFLWTKILTIAQNLDWWWTSLSFPGGIPECTGQNSQFQTCKHLPTSCPPTCNGFRWMYLRRFIIYLLVLLLCLIFLLVLLDWKGLIPVCPIQPTTETTVNCRQCTISVQDMYTPPYCCCLKPTAGNCTCWPIPSSWALGNYLWEWALARFSWLNLLVPLLQWLGGISLIAWFLLIWMIWFWGPALLSILPPFIPIFVLFFLIWVYI.

The N-myristoyl glycine; by host moiety is linked to residue G2. The segment at 2–143 (GNNIKVTFNP…PPLRDTHPHL (142 aa)) is pre-S1. The tract at residues 2-202 (GNNIKVTFNP…PSTTGDPAQS (201 aa)) is pre-S. The Virion surface; in external conformation portion of the chain corresponds to 2–209 (GNNIKVTFNP…AQSPEMSPSS (208 aa)). Over 2-281 (GNNIKVTFNP…NGFRWMYLRR (280 aa)) the chain is Intravirion; in internal conformation. An N-linked (GlcNAc...) asparagine glycan is attached at N3. A disordered region spans residues 107–142 (IRDIPRGLVPPQTPTNRDQGRKPTPPTPPLRDTHPH). The tract at residues 144-202 (TMKNQTFHLQGFVDGLRDLTTTERQHNAYGDPFTTLSPVVPTVSTILSPPSTTGDPAQS) is pre-S2. A helical transmembrane segment spans residues 210–230 (LLGLLAGLQVVYFLWTKILTI). Over 231-281 (AQNLDWWWTSLSFPGGIPECTGQNSQFQTCKHLPTSCPPTCNGFRWMYLRR) the chain is Intravirion; in external conformation. The helical transmembrane segment at 282–302 (FIIYLLVLLLCLIFLLVLLDW) threads the bilayer. Over 303 to 374 (KGLIPVCPIQ…WALARFSWLN (72 aa)) the chain is Virion surface. N346 carries an N-linked (GlcNAc...) asparagine; by host glycan. A helical membrane pass occupies residues 375–395 (LLVPLLQWLGGISLIAWFLLI). Residues 396–401 (WMIWFW) are Intravirion-facing. Residues 402–424 (GPALLSILPPFIPIFVLFFLIWV) traverse the membrane as a helical segment. The Virion surface segment spans residues 425 to 426 (YI).

The protein belongs to the orthohepadnavirus major surface antigen family. In terms of assembly, in its internal form (Li-HBsAg), interacts with the capsid protein and with the isoform S. Interacts with host chaperone CANX. Associates with host chaperone CANX through its pre-S2 N glycan; this association may be essential for isoform M proper secretion. As to quaternary structure, interacts with isoform L. Interacts with the antigens of satellite virus HDV (HDVAgs); this interaction is required for encapsidation of HDV genomic RNA. Isoform M is N-terminally acetylated by host at a ratio of 90%, and N-glycosylated by host at the pre-S2 region. In terms of processing, myristoylated.

The protein resides in the virion membrane. In terms of biological role, the large envelope protein exists in two topological conformations, one which is termed 'external' or Le-HBsAg and the other 'internal' or Li-HBsAg. In its external conformation the protein attaches the virus to cell receptors and thereby initiating infection. This interaction determines the species specificity and liver tropism. This attachment induces virion internalization predominantly through caveolin-mediated endocytosis. The large envelope protein also assures fusion between virion membrane and endosomal membrane. In its internal conformation the protein plays a role in virion morphogenesis and mediates the contact with the nucleocapsid like a matrix protein. The middle envelope protein plays an important role in the budding of the virion. It is involved in the induction of budding in a nucleocapsid independent way. In this process the majority of envelope proteins bud to form subviral lipoprotein particles of 22 nm of diameter that do not contain a nucleocapsid. This Marmota monax (Woodchuck) protein is Large envelope protein.